Consider the following 205-residue polypeptide: GTP cyclohydrolase-2 (205 aa).

Residue 49–53 (RIHSE) participates in GTP binding. Residues cysteine 54, cysteine 65, and cysteine 67 each coordinate Zn(2+). GTP is bound by residues glutamine 70, 92–94 (EGR), and threonine 114. The Proton acceptor role is filled by aspartate 126. Arginine 128 functions as the Nucleophile in the catalytic mechanism. Threonine 149 and lysine 154 together coordinate GTP.

This sequence belongs to the GTP cyclohydrolase II family. Zn(2+) is required as a cofactor.

The enzyme catalyses GTP + 4 H2O = 2,5-diamino-6-hydroxy-4-(5-phosphoribosylamino)-pyrimidine + formate + 2 phosphate + 3 H(+). It functions in the pathway cofactor biosynthesis; riboflavin biosynthesis; 5-amino-6-(D-ribitylamino)uracil from GTP: step 1/4. In terms of biological role, catalyzes the conversion of GTP to 2,5-diamino-6-ribosylamino-4(3H)-pyrimidinone 5'-phosphate (DARP), formate and pyrophosphate. This is GTP cyclohydrolase-2 from Shewanella piezotolerans (strain WP3 / JCM 13877).